A 270-amino-acid chain; its full sequence is Nodule lectin (270 aa).

Residues 1–33 (MAFYRTNLPTRELFSLVSVVIVLLATNINSVQA) form the signal peptide. A propeptide spanning residues 34 to 41 (LSFNFTKL) is cleaved from the precursor. The N-linked (GlcNAc...) asparagine glycan is linked to Asn134.

Belongs to the leguminous lectin family. Glycosylated in a boron-dependent manner. Glycosylation is required for localization to symbiosomes. 3 different glycosylation variants, NLEC-1A, NLEC-1B and NLEC-1C, have been identified. As to expression, expressed in nodules of Rhizobium-infected and uninfected roots and in the root stele near the nodule attachment point. In roots which have been colonized by the endomycorrhizal fungus G.versiforme, detected only in cortical cells colonized by the fungus, mainly those containing arbuscules.

Its subcellular location is the symbiosome. It is found in the peribacteroid space. The protein localises to the peribacteroid membrane. Functionally, involved in symbiosome development. The sequence is that of Nodule lectin (NLEC1) from Pisum sativum (Garden pea).